We begin with the raw amino-acid sequence, 86 residues long: Elongation factor 1-beta (86 aa).

Belongs to the EF-1-beta/EF-1-delta family.

Its function is as follows. Promotes the exchange of GDP for GTP in EF-1-alpha/GDP, thus allowing the regeneration of EF-1-alpha/GTP that could then be used to form the ternary complex EF-1-alpha/GTP/AAtRNA. The polypeptide is Elongation factor 1-beta (Methanocorpusculum labreanum (strain ATCC 43576 / DSM 4855 / Z)).